The primary structure comprises 354 residues: UDP-N-acetylglucosamine--N-acetylmuramyl-(pentapeptide) pyrophosphoryl-undecaprenol N-acetylglucosamine transferase (354 aa).

UDP-N-acetyl-alpha-D-glucosamine contacts are provided by residues 15 to 17 (TGG), Asn-127, Arg-163, Ser-191, Ile-244, 263 to 268 (ALTVSE), and Gln-288.

The protein belongs to the glycosyltransferase 28 family. MurG subfamily.

It is found in the cell inner membrane. It carries out the reaction di-trans,octa-cis-undecaprenyl diphospho-N-acetyl-alpha-D-muramoyl-L-alanyl-D-glutamyl-meso-2,6-diaminopimeloyl-D-alanyl-D-alanine + UDP-N-acetyl-alpha-D-glucosamine = di-trans,octa-cis-undecaprenyl diphospho-[N-acetyl-alpha-D-glucosaminyl-(1-&gt;4)]-N-acetyl-alpha-D-muramoyl-L-alanyl-D-glutamyl-meso-2,6-diaminopimeloyl-D-alanyl-D-alanine + UDP + H(+). The protein operates within cell wall biogenesis; peptidoglycan biosynthesis. Functionally, cell wall formation. Catalyzes the transfer of a GlcNAc subunit on undecaprenyl-pyrophosphoryl-MurNAc-pentapeptide (lipid intermediate I) to form undecaprenyl-pyrophosphoryl-MurNAc-(pentapeptide)GlcNAc (lipid intermediate II). This Serratia proteamaculans (strain 568) protein is UDP-N-acetylglucosamine--N-acetylmuramyl-(pentapeptide) pyrophosphoryl-undecaprenol N-acetylglucosamine transferase.